Here is a 217-residue protein sequence, read N- to C-terminus: MAFAASTACCKPSALLAPRASSSSPPSQARLCRPSTSAAFHGLRAPASAFALAPAPRRRAASTGIVCGKVSKGSVPPNFTLKDQDGKTVSLSKFKGKPVVLYFYPADETPGCTKQACAFRDSYEKYKKAGAEVIGISGDDAASHKAFAKKYRLPFTLLSDEGNKVRKEWGVPSDLFGTLPGRQTYVLDKKGVVQYIYNNQFQPEKHIGETLKIIQNL.

The transit peptide at 1–66 directs the protein to the chloroplast; sequence MAFAASTACC…RRRAASTGIV (66 aa). The 148-residue stretch at 70 to 217 folds into the Thioredoxin domain; sequence VSKGSVPPNF…GETLKIIQNL (148 aa). Cys112 acts as the Cysteine sulfenic acid (-SOH) intermediate in catalysis. The cysteines at positions 112 and 117 are disulfide-linked.

This sequence belongs to the peroxiredoxin family. BCP/PrxQ subfamily. In terms of assembly, monomer.

It localises to the plastid. The protein resides in the chloroplast thylakoid lumen. The enzyme catalyses a hydroperoxide + [thioredoxin]-dithiol = an alcohol + [thioredoxin]-disulfide + H2O. Its function is as follows. Thiol-specific peroxidase that catalyzes the reduction of hydrogen peroxide and organic hydroperoxides to water and alcohols, respectively. Plays a role in cell protection against oxidative stress by detoxifying peroxides. The protein is Peroxiredoxin Q, chloroplastic (PRX1) of Triticum aestivum (Wheat).